Here is a 90-residue protein sequence, read N- to C-terminus: Small ribosomal subunit protein uS15c (90 aa).

This sequence belongs to the universal ribosomal protein uS15 family. In terms of assembly, part of the 30S ribosomal subunit.

It is found in the plastid. The protein localises to the chloroplast. This is Small ribosomal subunit protein uS15c (rps15-A) from Oryza nivara (Indian wild rice).